A 382-amino-acid polypeptide reads, in one-letter code: MAKRDYYEVLGVSRTASADELKKAYRTKAKELHPDRNADNPQAEAQFKEVNEAYDVLRDADKKAAYDRYGHAAFEGGMGGGARAGGGYGQQGDFASAFSDVFEDLFGDFMGGRGGAPRSRAQRGSDLRYNLRVTLDEAYRGVQKTINVPASVACDACKGTGAEGGAEAVTCPTCSGMGKVRAQQGFFTVERTCPTCNGMGQIVKNPCKVCHGAGRVEKERSLSVNIPAGVETGTRIRLAGEGEAGMRGGPSGDLYIFIEVREHALFQRDGVHLFCRVPVSITAAALGGEVEVPTIDGGSSRVKIPAGSQTGKQMRLRGKGMPALRGGGAGDMLIELAVETPVNLTARQKELLREFEKLSEDNNPEGKSFFSKVKGFWDGMTG.

In terms of domain architecture, J spans 5–70 (DYYEVLGVSR…DKKAAYDRYG (66 aa)). The CR-type zinc finger occupies 141 to 219 (GVQKTINVPA…CHGAGRVEKE (79 aa)). Zn(2+) contacts are provided by C154, C157, C171, C174, C193, C196, C207, and C210. CXXCXGXG motif repeat units follow at residues 154-161 (CDACKGTG), 171-178 (CPTCSGMG), 193-200 (CPTCNGMG), and 207-214 (CKVCHGAG).

It belongs to the DnaJ family. In terms of assembly, homodimer. Zn(2+) is required as a cofactor.

It localises to the cytoplasm. Participates actively in the response to hyperosmotic and heat shock by preventing the aggregation of stress-denatured proteins and by disaggregating proteins, also in an autonomous, DnaK-independent fashion. Unfolded proteins bind initially to DnaJ; upon interaction with the DnaJ-bound protein, DnaK hydrolyzes its bound ATP, resulting in the formation of a stable complex. GrpE releases ADP from DnaK; ATP binding to DnaK triggers the release of the substrate protein, thus completing the reaction cycle. Several rounds of ATP-dependent interactions between DnaJ, DnaK and GrpE are required for fully efficient folding. Also involved, together with DnaK and GrpE, in the DNA replication of plasmids through activation of initiation proteins. The protein is Chaperone protein DnaJ of Cereibacter sphaeroides (strain ATCC 17029 / ATH 2.4.9) (Rhodobacter sphaeroides).